The primary structure comprises 145 residues: Allergen Sin a 1 (145 aa).

The tract at residues 34–62 (SGSGPSWTLDDEFDFEDDMENPQGPQQRP) is disordered. Positions 40-54 (WTLDDEFDFEDDMEN) are excised as a propeptide. Residues 42 to 53 (LDDEFDFEDDME) show a composition bias toward acidic residues.

It belongs to the 2S seed storage albumins family. In terms of assembly, the protein consists of two chains linked by disulfide bonds.

Its function is as follows. This is a 2S seed storage protein. This chain is Allergen Sin a 1, found in Sinapis alba (White mustard).